The primary structure comprises 136 residues: Large ribosomal subunit protein uL22 (136 aa).

Belongs to the universal ribosomal protein uL22 family. In terms of assembly, part of the 50S ribosomal subunit.

Functionally, this protein binds specifically to 23S rRNA; its binding is stimulated by other ribosomal proteins, e.g. L4, L17, and L20. It is important during the early stages of 50S assembly. It makes multiple contacts with different domains of the 23S rRNA in the assembled 50S subunit and ribosome. In terms of biological role, the globular domain of the protein is located near the polypeptide exit tunnel on the outside of the subunit, while an extended beta-hairpin is found that lines the wall of the exit tunnel in the center of the 70S ribosome. This chain is Large ribosomal subunit protein uL22, found in Bacteroides fragilis (strain YCH46).